A 218-amino-acid chain; its full sequence is Protein GrpE (218 aa).

The segment at 1-78 (MSEFNKDDYL…DSADTLTPLG (78 aa)) is disordered. Low complexity predominate over residues 14–58 (PDPSDAEAAAQASSGADASAESGSAQDSAAQAPSNEGADAAPAAA).

The protein belongs to the GrpE family. In terms of assembly, homodimer.

It localises to the cytoplasm. In terms of biological role, participates actively in the response to hyperosmotic and heat shock by preventing the aggregation of stress-denatured proteins, in association with DnaK and GrpE. It is the nucleotide exchange factor for DnaK and may function as a thermosensor. Unfolded proteins bind initially to DnaJ; upon interaction with the DnaJ-bound protein, DnaK hydrolyzes its bound ATP, resulting in the formation of a stable complex. GrpE releases ADP from DnaK; ATP binding to DnaK triggers the release of the substrate protein, thus completing the reaction cycle. Several rounds of ATP-dependent interactions between DnaJ, DnaK and GrpE are required for fully efficient folding. The protein is Protein GrpE of Bifidobacterium longum (strain NCC 2705).